Here is a 339-residue protein sequence, read N- to C-terminus: MKILILLVAFVAAANAVSLYELVKEEWNAFKLQHRKNYDSETEERIRLKIYVQNKHKIAKHNQRFDLGQEKYRLRVNKYADLLHEEFVQTVNGFNRTDSKKSLKGVRIEEPVTFIEPANVEVPTTVDWRKKGAVTPVKDQGHCGSCWSFSATGALEGQHFRKTGKLVSLSEQNLVDCSGKYGNNGCNGGMMDYAFQYIKDNGGIDTEKSYPYEAIDDTCHFNPKAVGATDKGYVDIPQGDEEALKKALATVGPVSIAIDASHESFQFYSEGVYYEPQCDSENLDHGVLAVGYGTSEEGEDYWLVKNSWGTTWGDQGYVKMARNRDNHCGVATCASYPLV.

Positions 1–16 (MKILILLVAFVAAANA) are cleaved as a signal peptide. A propeptide spans 17-121 (VSLYELVKEE…VTFIEPANVE (105 aa)) (activation peptide). N95 carries an N-linked (GlcNAc...) asparagine glycan. 3 disulfides stabilise this stretch: C143-C186, C177-C219, and C278-C328. Residue C146 is part of the active site. Residues H285 and N306 contribute to the active site.

The protein belongs to the peptidase C1 family. Dimer of a heavy and a light chain linked by disulfide bonds. Interacts with cystatin; the interaction results in inhibition of cathepsin L-like peptidase activity. Salivary gland. Midgut.

The catalysed reaction is Specificity close to that of papain. As compared to cathepsin B, cathepsin L exhibits higher activity toward protein substrates, but has little activity on Z-Arg-Arg-NHMec, and no peptidyl-dipeptidase activity.. With respect to regulation, more active in the presence of a reducing agent DTT. In terms of biological role, proteinase exhibiting preference for Leu, Val and Phe residues at the P2 position. This is Cathepsin L-like peptidase from Aedes aegypti (Yellowfever mosquito).